We begin with the raw amino-acid sequence, 262 residues long: Acyl-[acyl-carrier-protein]--UDP-N-acetylglucosamine O-acyltransferase (262 aa).

Belongs to the transferase hexapeptide repeat family. LpxA subfamily. As to quaternary structure, homotrimer.

The protein localises to the cytoplasm. The catalysed reaction is a (3R)-hydroxyacyl-[ACP] + UDP-N-acetyl-alpha-D-glucosamine = a UDP-3-O-[(3R)-3-hydroxyacyl]-N-acetyl-alpha-D-glucosamine + holo-[ACP]. It functions in the pathway glycolipid biosynthesis; lipid IV(A) biosynthesis; lipid IV(A) from (3R)-3-hydroxytetradecanoyl-[acyl-carrier-protein] and UDP-N-acetyl-alpha-D-glucosamine: step 1/6. Functionally, involved in the biosynthesis of lipid A, a phosphorylated glycolipid that anchors the lipopolysaccharide to the outer membrane of the cell. The polypeptide is Acyl-[acyl-carrier-protein]--UDP-N-acetylglucosamine O-acyltransferase (Paraburkholderia phytofirmans (strain DSM 17436 / LMG 22146 / PsJN) (Burkholderia phytofirmans)).